The sequence spans 349 residues: Isopentenyl-diphosphate delta-isomerase (349 aa).

6–7 (RK) provides a ligand contact to substrate. FMN is bound by residues 62 to 64 (AMT), Ser-93, and Asn-122. Position 152 (Gln-152) interacts with substrate. Glu-153 contacts Mg(2+). Residues Lys-184, Thr-214, 258–259 (GG), and 280–281 (AG) contribute to the FMN site.

Belongs to the IPP isomerase type 2 family. As to quaternary structure, homooctamer. Dimer of tetramers. Requires FMN as cofactor. NADPH is required as a cofactor. It depends on Mg(2+) as a cofactor.

It is found in the cytoplasm. It catalyses the reaction isopentenyl diphosphate = dimethylallyl diphosphate. In terms of biological role, involved in the biosynthesis of isoprenoids. Catalyzes the 1,3-allylic rearrangement of the homoallylic substrate isopentenyl (IPP) to its allylic isomer, dimethylallyl diphosphate (DMAPP). The chain is Isopentenyl-diphosphate delta-isomerase from Bacillus cereus (strain 03BB102).